Reading from the N-terminus, the 267-residue chain is Interleukin-1 beta (267 aa).

A propeptide spanning residues 1 to 114 (MAIVPEPAKE…ETCNDDFVCD (114 aa)) is cleaved from the precursor.

Belongs to the IL-1 family. (Microbial infection) Interacts with African swine fever virus (ASFV) protein L83L. As to quaternary structure, monomer. In its precursor form, weakly interacts with full-length MEFV; the mature cytokine does not interact at all. Interacts with integrins ITGAV:ITGBV and ITGA5:ITGB1; integrin-binding is required for IL1B signaling. Interacts with cargo receptor TMED10; the interaction is direct and is required for the secretion of IL1B mature form. Interacts with HSP90AB1; the interaction facilitates cargo translocation into the ERGIC. Interacts with HSP90B1; the interaction facilitates cargo translocation into the ERGIC.

It is found in the cytoplasm. Its subcellular location is the cytosol. It localises to the secreted. The protein resides in the lysosome. The protein localises to the extracellular exosome. Its function is as follows. Potent pro-inflammatory cytokine. Initially discovered as the major endogenous pyrogen, induces prostaglandin synthesis, neutrophil influx and activation, T-cell activation and cytokine production, B-cell activation and antibody production, and fibroblast proliferation and collagen production. Promotes Th17 differentiation of T-cells. Synergizes with IL12/interleukin-12 to induce IFNG synthesis from T-helper 1 (Th1) cells. Plays a role in angiogenesis by inducing VEGF production synergistically with TNF and IL6. Involved in transduction of inflammation downstream of pyroptosis: its mature form is specifically released in the extracellular milieu by passing through the gasdermin-D (GSDMD) pore. This Sus scrofa (Pig) protein is Interleukin-1 beta (IL1B).